Consider the following 360-residue polypeptide: Phenylalanine--tRNA ligase alpha subunit (360 aa).

Residue glutamate 260 participates in Mg(2+) binding.

The protein belongs to the class-II aminoacyl-tRNA synthetase family. Phe-tRNA synthetase alpha subunit type 1 subfamily. Tetramer of two alpha and two beta subunits. It depends on Mg(2+) as a cofactor.

Its subcellular location is the cytoplasm. The enzyme catalyses tRNA(Phe) + L-phenylalanine + ATP = L-phenylalanyl-tRNA(Phe) + AMP + diphosphate + H(+). This is Phenylalanine--tRNA ligase alpha subunit from Methylocella silvestris (strain DSM 15510 / CIP 108128 / LMG 27833 / NCIMB 13906 / BL2).